We begin with the raw amino-acid sequence, 597 residues long: Elongation factor 4 (597 aa).

Residues 2–184 form the tr-type G domain; the sequence is DHIRNFSIIA…ALIAKVPPPK (183 aa). GTP is bound by residues 14 to 19 and 131 to 134; these read DHGKST and NKID.

This sequence belongs to the TRAFAC class translation factor GTPase superfamily. Classic translation factor GTPase family. LepA subfamily.

The protein resides in the cell inner membrane. The catalysed reaction is GTP + H2O = GDP + phosphate + H(+). Functionally, required for accurate and efficient protein synthesis under certain stress conditions. May act as a fidelity factor of the translation reaction, by catalyzing a one-codon backward translocation of tRNAs on improperly translocated ribosomes. Back-translocation proceeds from a post-translocation (POST) complex to a pre-translocation (PRE) complex, thus giving elongation factor G a second chance to translocate the tRNAs correctly. Binds to ribosomes in a GTP-dependent manner. In Cupriavidus pinatubonensis (strain JMP 134 / LMG 1197) (Cupriavidus necator (strain JMP 134)), this protein is Elongation factor 4.